We begin with the raw amino-acid sequence, 374 residues long: RNA polymerase sigma factor SigA (374 aa).

The segment at 141-211 (LAEANLRLVV…TRAIADQART (71 aa)) is sigma-70 factor domain-2. The short motif at 165-168 (DLIQ) is the Interaction with polymerase core subunit RpoC element. Residues 220-296 (ETINKLIRVQ…DQDATSPSDH (77 aa)) form a sigma-70 factor domain-3 region. Residues 309-362 (VLDTLTDREENVLRLRFGLDDGRTRTLEEVGRVFGVTRERIRQIEAKALRKLRH) are sigma-70 factor domain-4. The segment at residues 335–354 (LEEVGRVFGVTRERIRQIEA) is a DNA-binding region (H-T-H motif).

It belongs to the sigma-70 factor family. RpoD/SigA subfamily. In terms of assembly, interacts transiently with the RNA polymerase catalytic core.

The protein localises to the cytoplasm. Its function is as follows. Sigma factors are initiation factors that promote the attachment of RNA polymerase to specific initiation sites and are then released. This sigma factor is the primary sigma factor during exponential growth. In Listeria monocytogenes serovar 1/2a (strain ATCC BAA-679 / EGD-e), this protein is RNA polymerase sigma factor SigA.